The primary structure comprises 617 residues: Dihydroxy-acid dehydratase (617 aa).

Aspartate 81 provides a ligand contact to Mg(2+). [2Fe-2S] cluster is bound at residue cysteine 122. Residues aspartate 123 and lysine 124 each coordinate Mg(2+). N6-carboxylysine is present on lysine 124. [2Fe-2S] cluster is bound at residue cysteine 195. Position 492 (glutamate 492) interacts with Mg(2+). Serine 518 functions as the Proton acceptor in the catalytic mechanism.

It belongs to the IlvD/Edd family. Homodimer. It depends on [2Fe-2S] cluster as a cofactor. Mg(2+) serves as cofactor.

The enzyme catalyses (2R)-2,3-dihydroxy-3-methylbutanoate = 3-methyl-2-oxobutanoate + H2O. The catalysed reaction is (2R,3R)-2,3-dihydroxy-3-methylpentanoate = (S)-3-methyl-2-oxopentanoate + H2O. It participates in amino-acid biosynthesis; L-isoleucine biosynthesis; L-isoleucine from 2-oxobutanoate: step 3/4. It functions in the pathway amino-acid biosynthesis; L-valine biosynthesis; L-valine from pyruvate: step 3/4. In terms of biological role, functions in the biosynthesis of branched-chain amino acids. Catalyzes the dehydration of (2R,3R)-2,3-dihydroxy-3-methylpentanoate (2,3-dihydroxy-3-methylvalerate) into 2-oxo-3-methylpentanoate (2-oxo-3-methylvalerate) and of (2R)-2,3-dihydroxy-3-methylbutanoate (2,3-dihydroxyisovalerate) into 2-oxo-3-methylbutanoate (2-oxoisovalerate), the penultimate precursor to L-isoleucine and L-valine, respectively. The polypeptide is Dihydroxy-acid dehydratase (Buchnera aphidicola subsp. Cinara cedri (strain Cc)).